The primary structure comprises 906 residues: Envelope glycoprotein B (906 aa).

A signal peptide spans 1–31 (MESRIWCLVVCVNLCIVCLGAAVSSSSTSHA). The segment covering 29–46 (SHATSSTHNGSHTSRTTS) has biased composition (low complexity). A disordered region spans residues 29-51 (SHATSSTHNGSHTSRTTSAQTRS). Topologically, residues 32–750 (TSSTHNGSHT…EGVATFLKNP (719 aa)) are virion surface. N-linked (GlcNAc...) asparagine; by host glycans are attached at residues asparagine 37, asparagine 68, asparagine 73, and asparagine 85. Cystine bridges form between cysteine 94/cysteine 550, cysteine 111/cysteine 506, cysteine 185/cysteine 250, cysteine 246/cysteine 250, and cysteine 344/cysteine 391. Positions 152-158 (SYAYIYT) are involved in fusion and/or binding to host membrane. Asparagine 208 is a glycosylation site (N-linked (GlcNAc...) asparagine; by host). Residues 237–244 (GSTWLYRE) form an involved in fusion and/or binding to host membrane region. Residues asparagine 281, asparagine 286, asparagine 302, asparagine 341, asparagine 383, asparagine 405, asparagine 409, asparagine 417, asparagine 447, asparagine 452, asparagine 464, asparagine 465, asparagine 554, and asparagine 585 are each glycosylated (N-linked (GlcNAc...) asparagine; by host). Cysteine 573 and cysteine 610 are disulfide-bonded. Hydrophobic membrane proximal region regions lie at residues 696 to 748 (VEDK…TFLK) and 727 to 747 (VAIG…ATFL). The chain crosses the membrane as a helical span at residues 751–771 (FGAFTIILVAIAVVIITYLIY). Residues 772 to 906 (TRQRRLCTQP…LKDSDEEENV (135 aa)) are Intravirion-facing. Polar residues-rich tracts occupy residues 797–809 (VTSG…SLQA) and 859–876 (RAQQ…GTQD). Disordered stretches follow at residues 797 to 837 (VTSG…TAAP) and 856 to 906 (AEQR…EENV). The segment covering 877 to 886 (KGQKPNLLDR) has biased composition (basic and acidic residues). An Internalization motif motif is present at residues 894 to 897 (YRHL).

Belongs to the herpesviridae glycoprotein B family. In terms of assembly, homotrimer; disulfide-linked. Binds to heparan sulfate proteoglycans. Interacts with gH/gL heterodimer. Interacts with host TLR1 and TLR2. Interacts with host C-type lectin CD209/DC-SIGN. Interacts with host ITGB1, EGFR, and PDGFRA. A proteolytic cleavage by host furin generates two subunits that remain linked by disulfide bonds.

It is found in the virion membrane. The protein resides in the host cell membrane. The protein localises to the host endosome membrane. Its subcellular location is the host Golgi apparatus membrane. Its function is as follows. Envelope glycoprotein that plays a role in host cell entry, cell to-cell virus transmission, and fusion of infected cells. May be involved in the initial attachment via binding to heparan sulfate together with the gM/gN complex that binds heparin with higher affinity. Interacts with host integrin ITGB1, PDGFRA and EGFR that likely serve as postattachment entry receptors. Also participates in the fusion of viral and cellular membranes leading to virus entry into the host cell. Membrane fusion is mediated by the fusion machinery composed at least of gB and the heterodimer gH/gL. This Human cytomegalovirus (strain AD169) (HHV-5) protein is Envelope glycoprotein B.